The sequence spans 234 residues: Sugar fermentation stimulation protein A (234 aa).

Positions 201–220 (LLSEAQQRGVEILAYKAELS) form a DNA-binding region, H-T-H motif.

It belongs to the SfsA family.

Its function is as follows. Binds to DNA non-specifically. Could be a regulatory factor involved in maltose metabolism. This is Sugar fermentation stimulation protein A from Escherichia coli O127:H6 (strain E2348/69 / EPEC).